The sequence spans 576 residues: High-affinity choline transporter 1 (576 aa).

Residues 6–26 form a helical membrane-spanning segment; the sequence is GIVAIVFFYVLILVVGIWAGR. Over 27–51 the chain is Cytoplasmic; that stretch reads KSKSSKELESEAGAATEEVMLAGRN. Residues 52 to 72 traverse the membrane as a helical segment; the sequence is IGTLVGIFTMTATWVGGAYIN. Over 73–82 the chain is Extracellular; that stretch reads GTAEALYNGG. Residues 83 to 103 form a helical membrane-spanning segment; it reads LLGCQAPVGYAISLVMGGLLF. The Cytoplasmic portion of the chain corresponds to 104–126; it reads AKKMREEGYITMLDPFQHKYGQR. A helical membrane pass occupies residues 127–147; sequence IGGLMYVPALLGETFWTAAIL. Residues 148–165 are Extracellular-facing; that stretch reads SALGATLSVILGIDMNAS. Residues 166 to 186 traverse the membrane as a helical segment; sequence VTLSACIAVFYTFTGGYYAVA. Residues 187-192 lie on the Cytoplasmic side of the membrane; the sequence is YTDVVQ. The helical transmembrane segment at 193–213 threads the bilayer; the sequence is LFCIFVGLWVCVPAAMVHDGA. The Extracellular portion of the chain corresponds to 214–233; sequence KDISRNAGDWIGEIGGFKET. The chain crosses the membrane as a helical span at residues 234–254; the sequence is SLWIDCMLLLVFGGIPWQVYF. Residues 255-270 are Cytoplasmic-facing; that stretch reads QRVLSSKTAHGAQTLS. A helical transmembrane segment spans residues 271-291; it reads FVAGVGCILMAIPPALIGAIA. Topologically, residues 292–319 are extracellular; the sequence is RNTDWRMTDYSPWNNGTKVESIPPDKRN. N-linked (GlcNAc...) asparagine glycosylation occurs at N306. Residues 320–340 traverse the membrane as a helical segment; that stretch reads MVVPLVFQYLTPRWVAFIGLG. Topologically, residues 341–378 are cytoplasmic; sequence AVSAAVMSSADSSVLSAASMFAHNIWKLTIRPHASEKE. A helical membrane pass occupies residues 379-399; that stretch reads VIIVMRIAIICVGIMATIMAL. Residues 400–408 lie on the Extracellular side of the membrane; that stretch reads TIQSIYGLW. A helical transmembrane segment spans residues 409–429; that stretch reads YLCADLVYVILFPQLLCVVYM. Over 430–437 the chain is Cytoplasmic; the sequence is PRSNTYGS. Residues 438–458 form a helical membrane-spanning segment; sequence LAGYAVGLVLRLIGGEPLVSL. At 459–478 the chain is on the extracellular side; that stretch reads PAFFHYPMYTDGVQYFPFRT. The helical transmembrane segment at 479 to 499 threads the bilayer; the sequence is TAMLSSMATIYIVSIQSEKLF. At 500 to 576 the chain is on the cytoplasmic side; that stretch reads KSGRLSPEWD…DQSYYSTNSN (77 aa). Residues 541–576 are disordered; that stretch reads APNGTPAPVHPNQQPSDENTLLHPYSDQSYYSTNSN. Over residues 566–576 the composition is skewed to polar residues; sequence SDQSYYSTNSN.

It belongs to the sodium:solute symporter (SSF) (TC 2.A.21) family. Detected in the nervous system, including the nerve ring and cholinergic motor neurons of the ventral nerve cord.

Its subcellular location is the membrane. In terms of biological role, imports choline from the extracellular space to the neuron with high affinity. Choline uptake is the rate-limiting step in acetylcholine synthesis. Sodium ion and chloride ion dependent. This chain is High-affinity choline transporter 1 (cho-1), found in Caenorhabditis elegans.